We begin with the raw amino-acid sequence, 61 residues long: Small ribosomal subunit protein uS14 (61 aa).

Residues Cys-24, Cys-27, Cys-40, and Cys-43 each contribute to the Zn(2+) site.

It belongs to the universal ribosomal protein uS14 family. Zinc-binding uS14 subfamily. Part of the 30S ribosomal subunit. Contacts proteins S3 and S10. The cofactor is Zn(2+).

Functionally, binds 16S rRNA, required for the assembly of 30S particles and may also be responsible for determining the conformation of the 16S rRNA at the A site. This chain is Small ribosomal subunit protein uS14, found in Caldanaerobacter subterraneus subsp. tengcongensis (strain DSM 15242 / JCM 11007 / NBRC 100824 / MB4) (Thermoanaerobacter tengcongensis).